A 431-amino-acid polypeptide reads, in one-letter code: 4-hydroxy-3-methylbut-2-en-1-yl diphosphate synthase (flavodoxin) (431 aa).

Positions 310, 313, 356, and 363 each coordinate [4Fe-4S] cluster.

It belongs to the IspG family. The cofactor is [4Fe-4S] cluster.

The enzyme catalyses (2E)-4-hydroxy-3-methylbut-2-enyl diphosphate + oxidized [flavodoxin] + H2O + 2 H(+) = 2-C-methyl-D-erythritol 2,4-cyclic diphosphate + reduced [flavodoxin]. The protein operates within isoprenoid biosynthesis; isopentenyl diphosphate biosynthesis via DXP pathway; isopentenyl diphosphate from 1-deoxy-D-xylulose 5-phosphate: step 5/6. Its function is as follows. Converts 2C-methyl-D-erythritol 2,4-cyclodiphosphate (ME-2,4cPP) into 1-hydroxy-2-methyl-2-(E)-butenyl 4-diphosphate. This Rhodopseudomonas palustris (strain HaA2) protein is 4-hydroxy-3-methylbut-2-en-1-yl diphosphate synthase (flavodoxin).